The following is a 711-amino-acid chain: Putative membrane protein ActII-3 (711 aa).

The next 12 helical transmembrane spans lie at 14-34 (LKWL…PLAG), 175-195 (ADFK…VVTY), 199-219 (LLWL…QAIV), 235-255 (AMIL…LLVA), 281-301 (AIVA…LAAL), 313-333 (VGVL…LVIF), 369-389 (AVWV…VTLN), 516-536 (IIPV…RALV), 540-560 (LLIA…ALFF), 573-593 (FPLW…IFLV), 623-643 (AGLV…VFIA), and 645-665 (LGFT…SVLV). The segment at 685-711 (REDPSEDPAVSGMPDSIDSEASTTASR) is disordered.

It belongs to the resistance-nodulation-cell division (RND) (TC 2.A.6) family. MmpL subfamily.

It is found in the cell membrane. This is Putative membrane protein ActII-3 (actII-3) from Streptomyces coelicolor (strain ATCC BAA-471 / A3(2) / M145).